A 416-amino-acid chain; its full sequence is Glutamyl-tRNA reductase (416 aa).

Residues 49–52 (TCNR), Ser105, 110–112 (EPQ), and Gln116 each bind substrate. Cys50 (nucleophile) is an active-site residue. 185–190 (GAGETI) is an NADP(+) binding site.

Belongs to the glutamyl-tRNA reductase family. As to quaternary structure, homodimer.

The enzyme catalyses (S)-4-amino-5-oxopentanoate + tRNA(Glu) + NADP(+) = L-glutamyl-tRNA(Glu) + NADPH + H(+). Its pathway is porphyrin-containing compound metabolism; protoporphyrin-IX biosynthesis; 5-aminolevulinate from L-glutamyl-tRNA(Glu): step 1/2. Functionally, catalyzes the NADPH-dependent reduction of glutamyl-tRNA(Glu) to glutamate 1-semialdehyde (GSA). In Shewanella sediminis (strain HAW-EB3), this protein is Glutamyl-tRNA reductase.